Consider the following 304-residue polypeptide: Thyroxine 5-deiodinase (304 aa).

Residues 1–22 form a disordered region; it reads MPRQAASRLVVGEGEGPPGASG. The Cytoplasmic segment spans residues 1–42; it reads MPRQAASRLVVGEGEGPPGASGPAATMLRSLLLHSLRLCAQT. A helical; Signal-anchor for type II membrane protein transmembrane segment spans residues 43-62; that stretch reads ASCLVLFPRFLGTAFMLWLL. The Extracellular segment spans residues 63–304; it reads DFLCIRKHFL…QLHGTRPRRL (242 aa). Selenocysteine 170 is a catalytic residue. Residue selenocysteine 170 is a non-standard amino acid, selenocysteine.

It belongs to the iodothyronine deiodinase family. As to quaternary structure, monomer. Homodimer. May undergo minor heretodimerization with DIO1 and DIO2. Neonatal skin, placenta, skeletal muscle and cerebral cortex.

It localises to the cell membrane. The protein resides in the endosome membrane. It carries out the reaction 3,3',5'-triiodo-L-thyronine + iodide + A + H(+) = L-thyroxine + AH2. The catalysed reaction is 3,3'-diiodo-L-thyronine + iodide + A + H(+) = 3,3',5-triiodo-L-thyronine + AH2. It catalyses the reaction 3-iodo-L-thyronine + iodide + A + H(+) = 3,5-diiodo-L-thyronine + AH2. The enzyme catalyses L-thyronine + iodide + A + H(+) = 3-iodo-L-thyronine + AH2. It carries out the reaction 3',5'-diiodo-L-thyronine + iodide + A + H(+) = 3,3',5'-triiodo-L-thyronine + AH2. The catalysed reaction is 3'-iodo-L-thyronine + iodide + A + H(+) = 3,3'-diiodo-L-thyronine + AH2. It catalyses the reaction 3,3',5'-triiodothyronamine + iodide + A + H(+) = 3,3',5,5'-tetraiodothyronamine + AH2. The enzyme catalyses 3',5'-diiodothyronamine + iodide + A + H(+) = 3,3',5'-triiodothyronamine + AH2. It carries out the reaction 3,3'-diiodothyronamine + iodide + A + H(+) = 3,3',5-triiodothyronamine + AH2. The catalysed reaction is 3-iodothyronamine + iodide + A + H(+) = 3,5-diiodothyronamine + AH2. It catalyses the reaction 3'-iodothyronamine + iodide + A + H(+) = 3,3'-diiodothyronamine + AH2. The enzyme catalyses thyronamine + iodide + A + H(+) = 3-iodothyronamine + AH2. Functionally, plays a crucial role in the metabolism of thyroid hormones (TH) and has specific roles in TH activation and inactivation by deiodination. Catalyzes the deiodination of L-thyroxine (T4) to 3,3',5'-triiodothyronine (rT3), 3,5-diiodothyronine (3,5-T2) to 3-monoiodothyronine (3-T1), rT3 to 3',5'-diiodothyronine (3',5'-T2) and 3,3'-diiodothyronine (3,3'-T2) to 3'-monoiodothyronine (3'-T1) via inner-ring deiodination (IRD). Catalyzes the deiodination of 3,5,3'-triiodothyronine (T3) to 3,3'-diiodothyronine (3,3'-T2) via IRD. Catalyzes the deiodination of 3-T1 to L-thyronine (T0) via outer-ring deiodination (ORD). Catalyzes the tyrosyl ring deiodinations of T4AM (3,3',5,5'-tetraiodothyronamine), rT3AM (3,3',5'-triiodothyronamine), T3AM (3,5,3'-triiodothyronamine), 3,5-T2AM (3,5-diiodothyronamine), 3,3'-T2AM (3,3'-diiodothyronamine) and 3-T1AM (3-iodothyronamine). The protein is Thyroxine 5-deiodinase (Dio3) of Rattus norvegicus (Rat).